The primary structure comprises 806 residues: MASGADSKGDDLSTAILKQKNRPNRLIVDEAINEDNSVVSLSQPKMDELQLFRGDTVLLKGKKRREAVCIVLSDDTCSDEKIRMNRVVRNNLRVRLGDVISIQPCPDVKYGKRIHVLPIDDTVEGITGNLFEVYLKPYFLEAYRPIRKGDIFLVRGGMRAVEFKVVETDPSPYCIVAPDTVIHCEGEPIKREDEEESLNEVGYDDIGGCRKQLAQIKEMVELPLRHPALFKAIGVKPPRGILLYGPPGTGKTLIARAVANETGAFFFLINGPEIMSKLAGESESNLRKAFEEAEKNAPAIIFIDELDAIAPKREKTHGEVERRIVSQLLTLMDGLKQRAHVIVMAATNRPNSIDPALRRFGRFDREVDIGIPDATGRLEILQIHTKNMKLADDVDLEQVANETHGHVGADLAALCSEAALQAIRKKMDLIDLEDETIDAEVMNSLAVTMDDFRWALSQSNPSALRETVVEVPQVTWEDIGGLEDVKRELQELVQYPVEHPDKFLKFGMTPSKGVLFYGPPGCGKTLLAKAIANECQANFISIKGPELLTMWFGESEANVREIFDKARQAAPCVLFFDELDSIAKARGGNIGDGGGAADRVINQILTEMDGMSTKKNVFIIGATNRPDIIDPAILRPGRLDQLIYIPLPDEKSRVAILKANLRKSPVAKDVDLEFLAKMTNGFSGADLTEICQRACKLAIRESIESEIRRERERQTNPSAMEVEEDDPVPEIRRDHFEEAMRFARRSVSDNDIRKYEMFAQTLQQSRGFGSFRFPSGNQGGAGPSQGSGGGTGGNVYTEDNDDDLYG.

An N-acetylalanine modification is found at Ala2. Phosphoserine is present on residues Ser3 and Ser7. Residue Lys8 forms a Glycyl lysine isopeptide (Lys-Gly) (interchain with G-Cter in SUMO2) linkage. Residue Ser13 is modified to Phosphoserine. A Glycyl lysine isopeptide (Lys-Gly) (interchain with G-Cter in SUMO2) cross-link involves residue Lys18. Ser37 bears the Phosphoserine mark. Pro247 to Leu253 contributes to the ATP binding site. The residue at position 315 (Lys315) is an N6,N6,N6-trimethyllysine; by VCPKMT. ATP contacts are provided by Asn348 and His384. Thr436 bears the Phosphothreonine mark. Position 462 is a phosphoserine (Ser462). An N6-acetyllysine mark is found at Lys502 and Lys505. Gly521–Leu526 provides a ligand contact to ATP. Lys668 bears the N6-acetyllysine; alternate mark. Residue Lys668 is modified to N6-succinyllysine; alternate. A Phosphoserine modification is found at Ser702. Positions Arg708 to Pro727 are disordered. N6-acetyllysine is present on Lys754. Residues Phe768–Gly806 form a disordered region. A phosphoserine mark is found at Ser770, Ser775, and Ser787. Over residues Asn777–Gly793 the composition is skewed to gly residues. Residues Thr797–Gly806 form an interaction with UBXN6 region. The PIM motif motif lies at Asp802–Gly806. Position 805 is a phosphotyrosine (Tyr805).

The protein belongs to the AAA ATPase family. As to quaternary structure, homohexamer. Forms a ring-shaped particle of 12.5 nm diameter, that displays 6-fold radial symmetry. Interacts with NSFL1C-like protein p37; the complex has membrane fusion activity and is required for Golgi and endoplasmic reticulum biogenesis. Interacts with RHBDD1 (via C-terminal domain). Interacts with SELENOS and SYVN1, as well as with DERL1 (via SHP-box motif), DERL2 and DERL3; which probably transfer misfolded proteins from the ER to VCP. Interacts with SVIP and DERL1. Component of a complex required to couple retrotranslocation, ubiquitination and deglycosylation composed of NGLY1, SAKS1, AMFR, VCP and RAD23B. Part of a complex composed of STUB1/CHIP, VCP/p97, CHRNA3, and UBXN2A that modulates the ubiquitination and endoplasmic reticulum-associated degradation (ERAD) of CHRNA3. Within the complex UBXN2A acts as a scaffold protein required for the interaction of CHRNA3 with VCP/p97, this interaction also inhibits CHRNA3 ubiquitination by STUB1/CHIP and subsequently ERAD. Interacts with UBXN2A (via UBX domain); the interaction is required for the interaction of CHRNA3 in the STUB1-VCP-UBXN2A complex. Directly interacts with UBXN4 and RNF19A. Interacts with CASR. Interacts with UBE4B and YOD1. Interacts with clathrin. Interacts with RNF103. Interacts with TRIM13 and TRIM21. Component of a VCP/p97-AMFR/gp78 complex that participates in the final step of the endoplasmic reticulum-associated degradation (ERAD) of HMGCR. Interacts directly with AMFR/gp78 (via its VIM). Interacts with SPRTN; leading to recruitment to stalled replication forks. Part of a ternary complex containing STX5A, NSFL1C and VCP. NSFL1C forms a homotrimer that binds to one end of a VCP homohexamer. The complex binds to membranes enriched in phosphatidylethanolamine-containing lipids and promotes Golgi membrane fusion. Binds to a heterodimer of NPLOC4 and UFD1, binding to this heterodimer inhibits Golgi-membrane fusion. Interaction with VCIP135 leads to dissociation of the complex via ATP hydrolysis by VCP. Part of a ternary complex containing NPLOC4, UFD1 and VCP. Interacts with WASHC5. Interacts with UBOX5. Interacts (via N-terminus) with UBXN7, UBXN8, and probably several other UBX domain-containing proteins (via UBX domains); the interactions are mutually exclusive with VIM-dependent interactions such as those with AMFR and SELENOS. Forms a complex with UBQLN1 and UBXN4. Interacts (via the PIM motif) with RNF31 (via the PUB domain). Interacts with RIGI and RNF125; interaction takes place when RIGI is ubiquitinated via 'Lys-63'-linked ubiquitin on its CARD domains, leading to recruit RNF125 and promote ubiquitination and degradation of RIGI. Interacts with BAG6. Interacts with UBXN10. Interacts with UBXN6; the interaction with UBXN6 is direct and competitive with UFD1. Forms a ternary complex with CAV1 and UBXN6. Interacts with PLAA, UBXN6 and YOD1; may form a complex involved in macroautophagy. Interacts with ANKZF1. Interacts with ubiquitin-binding protein FAF1. Interacts with ZFAND2B (via VIM motif); the interaction is direct. Interacts with ZFAND1 (via its ubiquitin-like region); this interaction occurs in an arsenite-dependent manner. Interacts with CCDC47. Interacts with LMBR1L and UBAC2. Interacts with ATXN3. Interacts with TEX264; bridging VCP to covalent DNA-protein cross-links (DPCs). In terms of processing, phosphorylated by tyrosine kinases in response to T-cell antigen receptor activation. Phosphorylated in mitotic cells. Post-translationally, ISGylated. Methylation at Lys-315 catalyzed by VCPKMT is increased in the presence of ASPSCR1. Lys-315 methylation may decrease ATPase activity.

It is found in the cytoplasm. The protein resides in the cytosol. Its subcellular location is the endoplasmic reticulum. The protein localises to the nucleus. It localises to the stress granule. The enzyme catalyses ATP + H2O = ADP + phosphate + H(+). Functionally, necessary for the fragmentation of Golgi stacks during mitosis and for their reassembly after mitosis. Involved in the formation of the transitional endoplasmic reticulum (tER). The transfer of membranes from the endoplasmic reticulum to the Golgi apparatus occurs via 50-70 nm transition vesicles which derive from part-rough, part-smooth transitional elements of the endoplasmic reticulum (tER). Vesicle budding from the tER is an ATP-dependent process. The ternary complex containing UFD1, VCP and NPLOC4 binds ubiquitinated proteins and is necessary for the export of misfolded proteins from the ER to the cytoplasm, where they are degraded by the proteasome. The NPLOC4-UFD1-VCP complex regulates spindle disassembly at the end of mitosis and is necessary for the formation of a closed nuclear envelope. Regulates E3 ubiquitin-protein ligase activity of RNF19A. Component of the VCP/p97-AMFR/gp78 complex that participates in the final step of the sterol-mediated ubiquitination and endoplasmic reticulum-associated degradation (ERAD) of HMGCR. Mediates the endoplasmic reticulum-associated degradation of CHRNA3 in cortical neurons as part of the STUB1-VCP-UBXN2A complex. Involved in endoplasmic reticulum stress-induced pre-emptive quality control, a mechanism that selectively attenuates the translocation of newly synthesized proteins into the endoplasmic reticulum and reroutes them to the cytosol for proteasomal degradation. Involved in clearance process by mediating G3BP1 extraction from stress granules. Also involved in DNA damage response: recruited to double-strand breaks (DSBs) sites in a RNF8- and RNF168-dependent manner and promotes the recruitment of TP53BP1 at DNA damage sites. Recruited to stalled replication forks by SPRTN: may act by mediating extraction of DNA polymerase eta (POLH) to prevent excessive translesion DNA synthesis and limit the incidence of mutations induced by DNA damage. Together with SPRTN metalloprotease, involved in the repair of covalent DNA-protein cross-links (DPCs) during DNA synthesis. Involved in interstrand cross-link repair in response to replication stress by mediating unloading of the ubiquitinated CMG helicase complex. Mediates extraction of PARP1 trapped to chromatin: recognizes and binds ubiquitinated PARP1 and promotes its removal. Required for cytoplasmic retrotranslocation of stressed/damaged mitochondrial outer-membrane proteins and their subsequent proteasomal degradation. Essential for the maturation of ubiquitin-containing autophagosomes and the clearance of ubiquitinated protein by autophagy. Acts as a negative regulator of type I interferon production by interacting with RIGI: interaction takes place when RIGI is ubiquitinated via 'Lys-63'-linked ubiquitin on its CARD domains, leading to recruit RNF125 and promote ubiquitination and degradation of RIGI. May play a role in the ubiquitin-dependent sorting of membrane proteins to lysosomes where they undergo degradation. May more particularly play a role in caveolins sorting in cells. By controlling the steady-state expression of the IGF1R receptor, indirectly regulates the insulin-like growth factor receptor signaling pathway. The polypeptide is Transitional endoplasmic reticulum ATPase (Vcp) (Rattus norvegicus (Rat)).